A 373-amino-acid chain; its full sequence is Histone-lysine N-methyltransferase SETD7 (373 aa).

Residues 1–20 (MDSDDDNMEEVVEGPLDEDD) form a disordered region. 3 MORN repeats span residues 36 to 58 (FEGH…DGST), 59 to 81 (LEGF…DGGA), and 106 to 128 (FRGR…DGAC). The SET domain maps to 214 to 336 (QRVYVGQSLI…KDEELTVAYG (123 aa)). Residues 226–228 (AGE), asparagine 296, and histidine 297 each bind S-adenosyl-L-methionine.

This sequence belongs to the class V-like SAM-binding methyltransferase superfamily. Histone-lysine methyltransferase family. SET7 subfamily.

The protein localises to the nucleus. It localises to the chromosome. The catalysed reaction is L-lysyl(4)-[histone H3] + S-adenosyl-L-methionine = N(6)-methyl-L-lysyl(4)-[histone H3] + S-adenosyl-L-homocysteine + H(+). The enzyme catalyses L-lysyl-[protein] + S-adenosyl-L-methionine = N(6)-methyl-L-lysyl-[protein] + S-adenosyl-L-homocysteine + H(+). Functionally, histone methyltransferase that specifically monomethylates 'Lys-4' of histone H3. H3 'Lys-4' methylation represents a specific tag for epigenetic transcriptional activation. Plays a central role in the transcriptional activation of genes. Also has methyltransferase activity toward non-histone proteins. The sequence is that of Histone-lysine N-methyltransferase SETD7 (setd7) from Danio rerio (Zebrafish).